The primary structure comprises 82 residues: uncharacterized protein (82 aa).

A 2Fe-2S ferredoxin-type domain is found at 1–82 (MKIHLIRHNT…HVESDIEIDL (82 aa)). [2Fe-2S] cluster is bound by residues Cys35, Cys40, Cys43, and Cys72.

Requires [2Fe-2S] cluster as cofactor.

This is an uncharacterized protein from Haemophilus influenzae (strain ATCC 51907 / DSM 11121 / KW20 / Rd).